The chain runs to 515 residues: 2,3-bisphosphoglycerate-independent phosphoglycerate mutase (515 aa).

Mn(2+) is bound by residues D14 and S64. The active-site Phosphoserine intermediate is the S64. Substrate-binding positions include H125, 155–156, R187, R193, 263–266, and K337; these read RD and RADR. Residues D404, H408, D445, H446, and H464 each coordinate Mn(2+).

Belongs to the BPG-independent phosphoglycerate mutase family. In terms of assembly, monomer. Requires Mn(2+) as cofactor.

The enzyme catalyses (2R)-2-phosphoglycerate = (2R)-3-phosphoglycerate. It participates in carbohydrate degradation; glycolysis; pyruvate from D-glyceraldehyde 3-phosphate: step 3/5. Catalyzes the interconversion of 2-phosphoglycerate and 3-phosphoglycerate. The sequence is that of 2,3-bisphosphoglycerate-independent phosphoglycerate mutase from Yersinia pseudotuberculosis serotype I (strain IP32953).